A 424-amino-acid chain; its full sequence is Glutamate-1-semialdehyde 2,1-aminomutase (424 aa).

Position 263 is an N6-(pyridoxal phosphate)lysine (Lys263).

The protein belongs to the class-III pyridoxal-phosphate-dependent aminotransferase family. HemL subfamily. As to quaternary structure, homodimer. Pyridoxal 5'-phosphate is required as a cofactor.

It is found in the cytoplasm. It carries out the reaction (S)-4-amino-5-oxopentanoate = 5-aminolevulinate. The protein operates within porphyrin-containing compound metabolism; protoporphyrin-IX biosynthesis; 5-aminolevulinate from L-glutamyl-tRNA(Glu): step 2/2. In Campylobacter jejuni subsp. doylei (strain ATCC BAA-1458 / RM4099 / 269.97), this protein is Glutamate-1-semialdehyde 2,1-aminomutase.